The following is a 326-amino-acid chain: Ribosomal large subunit pseudouridine synthase D (326 aa).

Residues 18–91 form the S4 RNA-binding domain; the sequence is QRLDQALAEM…IPLDIVYEDE (74 aa). Residue aspartate 139 is part of the active site.

It belongs to the pseudouridine synthase RluA family. In late stage pre-50S ribosomal subunit interacts with ObgE and DarP(YjgA).

The protein localises to the cytoplasm. It catalyses the reaction uridine(1911/1915/1917) in 23S rRNA = pseudouridine(1911/1915/1917) in 23S rRNA. Its function is as follows. Responsible for synthesis of pseudouridine from uracil at positions 1911, 1915 and 1917 in 23S ribosomal RNA. Other positions are not modified. Uridine isomerization occurs as a late step during the assembly of the large ribosomal subunit. Member of a network of 50S ribosomal subunit biogenesis factors (ObgE, RluD, RsfS and DarP(YjgA)) which assembles along the 30S-50S interface, allowing 23S rRNA modification and preventing incorrect 23S rRNA structures from forming. The protein is Ribosomal large subunit pseudouridine synthase D of Escherichia coli (strain K12).